A 284-amino-acid polypeptide reads, in one-letter code: Pseudouridine-5'-phosphate glycosidase (284 aa).

Catalysis depends on E17, which acts as the Proton donor. Substrate-binding residues include K77 and V97. Mn(2+) is bound at residue D126. Residue 128–130 (SQD) coordinates substrate. Catalysis depends on K147, which acts as the Nucleophile.

Belongs to the pseudouridine-5'-phosphate glycosidase family. In terms of assembly, homotrimer. Mn(2+) is required as a cofactor.

The catalysed reaction is D-ribose 5-phosphate + uracil = psi-UMP + H2O. In terms of biological role, catalyzes the reversible cleavage of pseudouridine 5'-phosphate (PsiMP) to ribose 5-phosphate and uracil. Functions biologically in the cleavage direction, as part of a pseudouridine degradation pathway. This chain is Pseudouridine-5'-phosphate glycosidase, found in Thermotoga neapolitana (strain ATCC 49049 / DSM 4359 / NBRC 107923 / NS-E).